A 560-amino-acid chain; its full sequence is Nibrin homolog (560 aa).

The FHA domain maps to 25–87 (YKVGRKDCDV…YGTFFNKVQG (63 aa)). One can recognise a BRCT domain in the interval 115–190 (TFRLSFVPIV…KQIVLGDWFK (76 aa)).

It belongs to the Nibrin family. Component of the MRN complex composed of two heterodimers RAD50 and MRE11 associated with a single NBS1. As to expression, mostly expressed in the shoot apex and young flower, but also in young leaves, root tips and stamen, tissues where frequent cell division or meiosis may occur.

The protein localises to the nucleus. It localises to the chromosome. Its function is as follows. Component of the MRN complex, which plays a central role in double-strand break (DSB) repair, DNA recombination, maintenance of telomere integrity and meiosis. The MRN complex is involved in the repair of DNA double-strand breaks (DSBs) via homologous recombination (HR), an error-free mechanism which primarily occurs during S and G2 phases. The complex (1) mediates the end resection of damaged DNA, which generates proper single-stranded DNA, a key initial steps in HR, and is (2) required for the recruitment of other repair factors and efficient activation of ATM and ATR upon DNA damage. The MRN complex possesses single-strand endonuclease activity and double-strand-specific 3'-5' exonuclease activity, which are provided by MRE11, to initiate end resection, which is required for single-strand invasion and recombination. Within the MRN complex, NBS1 acts as a protein-protein adapter, which specifically recognizes and binds phosphorylated proteins, promoting their recruitment to DNA damage sites. Recruits MRE11 and RAD50 components of the MRN complex to DSBs in response to DNA damage. The polypeptide is Nibrin homolog (Oryza sativa subsp. japonica (Rice)).